We begin with the raw amino-acid sequence, 251 residues long: Glutamate 5-kinase (251 aa).

Lys7 serves as a coordination point for ATP. Substrate-binding residues include Ser45, Asp130, and Asn142. ATP contacts are provided by residues 162–163 (SD) and 204–210 (TGGIVTK).

This sequence belongs to the glutamate 5-kinase family.

It localises to the cytoplasm. The catalysed reaction is L-glutamate + ATP = L-glutamyl 5-phosphate + ADP. The protein operates within amino-acid biosynthesis; L-proline biosynthesis; L-glutamate 5-semialdehyde from L-glutamate: step 1/2. Its function is as follows. Catalyzes the transfer of a phosphate group to glutamate to form L-glutamate 5-phosphate. The polypeptide is Glutamate 5-kinase (Campylobacter jejuni subsp. jejuni serotype O:6 (strain 81116 / NCTC 11828)).